Here is a 406-residue protein sequence, read N- to C-terminus: Anthranilate 1,2-dioxygenase system ferredoxin--NAD(+) reductase component (406 aa).

5–37 (PFVIVGAGHAARRTAEALRARDADAPIVMIGAE) contributes to the FAD binding site. Residue 152–161 (GGGFIGLEVA) participates in NAD(+) binding.

The protein belongs to the FAD-dependent oxidoreductase family. In terms of assembly, part of a multicomponent enzyme system composed of a reductase (AndAa), a ferredoxin (AndAb) and a two-subunit oxygenase component (AndAc and AndAd). Requires FAD as cofactor.

The catalysed reaction is 2 reduced [2Fe-2S]-[ferredoxin] + NAD(+) + H(+) = 2 oxidized [2Fe-2S]-[ferredoxin] + NADH. It functions in the pathway aromatic compound metabolism; anthranilate degradation via hydroxylation; catechol from anthranilate: step 1/1. In terms of biological role, part of the multicomponent anthranilate dioxygenase, that converts anthranilate to catechol. Probably transfers electrons from ferredoxin (AndAb) to NADH. This is Anthranilate 1,2-dioxygenase system ferredoxin--NAD(+) reductase component from Burkholderia cepacia (Pseudomonas cepacia).